A 268-amino-acid chain; its full sequence is MVLTRRAREVALTQHIGVSAETDRAVVPKLRQAYDSLVCGRRRLGAIGAEIENAVAHQRALGLDTPAGARNFSRFLATKAHDITRVLAATAAESQAGAARLRSLASSYQAVGFGPKPQEPPPDPVPFPPYQPKVWAACRARGQDPDKVVRTFHHAPMSARFRSLPAGDSVLYCGNDKYGLLHIQAKHGRQWHDIADARWPSAGNWRYLADYAIGATLAYPERVEYNQDNDTFAVYRRMSLPDGRYVFTTRVIISARDGKIITAFPQTT.

It to M.tuberculosis Rv0025 and Rv0026.

This is an uncharacterized protein from Mycobacterium tuberculosis (strain CDC 1551 / Oshkosh).